We begin with the raw amino-acid sequence, 548 residues long: tRNA (guanine(26)-N(2))-dimethyltransferase (548 aa).

One can recognise a Trm1 methyltransferase domain in the interval 30 to 470 (ASLTEGSAII…APWSFVWDVL (441 aa)). Residues Arg57, Arg137, Asp155, and Ala186 each coordinate S-adenosyl-L-methionine. Residues Cys317, Cys320, Cys354, and Cys357 each contribute to the Zn(2+) site. Residues 523-548 (QMNPTENWGPKSKPGKRTIAEVDSKS) form a disordered region.

The protein belongs to the class I-like SAM-binding methyltransferase superfamily. Trm1 family.

It localises to the mitochondrion. The protein localises to the nucleus. It is found in the cytoplasm. The catalysed reaction is guanosine(26) in tRNA + 2 S-adenosyl-L-methionine = N(2)-dimethylguanosine(26) in tRNA + 2 S-adenosyl-L-homocysteine + 2 H(+). Dimethylates a single guanine residue at position 26 of nuclear- and mitochondrial-encoded tRNAs using S-adenosyl-L-methionine as donor of the methyl groups. Also has tRNA strand annealing and dissociation activity independently of its tRNA guanine-dimethyltransferase activity. The protein is tRNA (guanine(26)-N(2))-dimethyltransferase of Schizosaccharomyces pombe (strain 972 / ATCC 24843) (Fission yeast).